The chain runs to 421 residues: UDP-N-acetylglucosamine 1-carboxyvinyltransferase (421 aa).

22–23 (KN) is a phosphoenolpyruvate binding site. Arginine 93 contributes to the UDP-N-acetyl-alpha-D-glucosamine binding site. Cysteine 117 (proton donor) is an active-site residue. Position 117 is a 2-(S-cysteinyl)pyruvic acid O-phosphothioketal (cysteine 117). UDP-N-acetyl-alpha-D-glucosamine contacts are provided by residues 122–126 (RPVDL), aspartate 308, and valine 330.

Belongs to the EPSP synthase family. MurA subfamily.

It localises to the cytoplasm. It catalyses the reaction phosphoenolpyruvate + UDP-N-acetyl-alpha-D-glucosamine = UDP-N-acetyl-3-O-(1-carboxyvinyl)-alpha-D-glucosamine + phosphate. It participates in cell wall biogenesis; peptidoglycan biosynthesis. Functionally, cell wall formation. Adds enolpyruvyl to UDP-N-acetylglucosamine. This chain is UDP-N-acetylglucosamine 1-carboxyvinyltransferase, found in Azotobacter vinelandii (strain DJ / ATCC BAA-1303).